The primary structure comprises 382 residues: ATP phosphoribosyltransferase regulatory subunit (382 aa).

This sequence belongs to the class-II aminoacyl-tRNA synthetase family. HisZ subfamily. As to quaternary structure, heteromultimer composed of HisG and HisZ subunits.

It localises to the cytoplasm. Its pathway is amino-acid biosynthesis; L-histidine biosynthesis; L-histidine from 5-phospho-alpha-D-ribose 1-diphosphate: step 1/9. In terms of biological role, required for the first step of histidine biosynthesis. May allow the feedback regulation of ATP phosphoribosyltransferase activity by histidine. The chain is ATP phosphoribosyltransferase regulatory subunit from Acidovorax ebreus (strain TPSY) (Diaphorobacter sp. (strain TPSY)).